A 256-amino-acid chain; its full sequence is Ribonuclease T2 (256 aa).

Positions methionine 1–alanine 24 are cleaved as a signal peptide. A disulfide bond links cysteine 48 and cysteine 55. Residue histidine 65 is part of the active site. 3 disulfides stabilise this stretch: cysteine 75/cysteine 121, cysteine 184/cysteine 241, and cysteine 202/cysteine 213. N-linked (GlcNAc...) asparagine glycans are attached at residues asparagine 76 and asparagine 106. Catalysis depends on residues glutamate 114 and histidine 118. N-linked (GlcNAc...) asparagine glycosylation is present at asparagine 212.

Belongs to the RNase T2 family. As to expression, ubiquitous. Higher expression levels observed in the temporal lobe and fetal brain.

It localises to the secreted. The protein resides in the lysosome lumen. Its subcellular location is the endoplasmic reticulum lumen. The protein localises to the mitochondrion intermembrane space. The enzyme catalyses a ribonucleotidyl-ribonucleotide-RNA + H2O = a 3'-end 3'-phospho-ribonucleotide-RNA + a 5'-end dephospho-ribonucleoside-RNA + H(+). It catalyses the reaction an adenylyl-uridine-RNA = a 3'-end 2',3'-cyclophospho-AMP-RNA + a 5'-end dephospho-uridine-RNA. The catalysed reaction is a guanylyl-uridine-RNA = a 3'-end 2',3'-cyclophospho-GMP-RNA + a 5'-end dephospho-uridine-RNA. With respect to regulation, inhibited by Zn(2+) and Cu(2+). Its function is as follows. Ribonuclease that plays an essential role in innate immune response by recognizing and degrading RNAs from microbial pathogens that are subsequently sensed by TLR8. Cleaves preferentially single-stranded RNA molecules between purine and uridine residues, which critically contributes to the supply of catabolic uridine and the generation of purine-2',3'-cyclophosphate-terminated oligoribonucleotides. In turn, RNase T2 degradation products promote the RNA-dependent activation of TLR8. In plasmacytoid dendritic cells, it cooperates with PLD3 or PLD4 5'-&gt;3' exonucleases to process RNA fragments and release 2',3'-cyclic guanosine monophosphate (2',3'-cGMP), a potent stimulatory ligand for TLR7. Also plays a key role in degradation of mitochondrial RNA and processing of non-coding RNA imported from the cytosol into mitochondria. Participates as well in degradation of mitochondrion-associated cytosolic rRNAs. This Homo sapiens (Human) protein is Ribonuclease T2 (RNASET2).